A 364-amino-acid chain; its full sequence is S-adenosylmethionine:tRNA ribosyltransferase-isomerase (364 aa).

Positions 344 to 364 (ASDKMQETSGRGERPRFDHEI) are disordered.

Belongs to the QueA family. In terms of assembly, monomer.

The protein resides in the cytoplasm. The catalysed reaction is 7-aminomethyl-7-carbaguanosine(34) in tRNA + S-adenosyl-L-methionine = epoxyqueuosine(34) in tRNA + adenine + L-methionine + 2 H(+). It participates in tRNA modification; tRNA-queuosine biosynthesis. Functionally, transfers and isomerizes the ribose moiety from AdoMet to the 7-aminomethyl group of 7-deazaguanine (preQ1-tRNA) to give epoxyqueuosine (oQ-tRNA). This is S-adenosylmethionine:tRNA ribosyltransferase-isomerase from Thioalkalivibrio sulfidiphilus (strain HL-EbGR7).